We begin with the raw amino-acid sequence, 533 residues long: MMNACTKFSDNYDVKEELGKGAFSVVRRCVHKTTGLEFAAKIINTKKLSARDFQKLEREARICRKLQHPNIVRLHDSIQEESFHYLVFDLVTGGELFEDIVAREFYSEADASHCIQQILESIAYCHSNGVVHRDLKPENLLLASKAKGAAVKLADFGLAIEVNDSEAWHGFAGTPGYLSPEVLKKDPYSKPVDIWACGVILYILLVGYPPFWDEDQHRLYAQIKAGAYDYPSPEWDTVTPEAKSLIDSMLTVNPKKRITADQALKVPWICNRERVASAIHRQDTVDCLKKFNARRKLKAAISAVKMVTRMSGVLRTSDSTGSVASNGSTTHDTSQIAGTSSQPTSPAAEGAILTTMIATRNLSNLGRNLLNKKEQGPPSTIKESSESSQTIDDNDSEKAQKQDIVRVTQTLLDAISCKDFDTYTRLCDTSMTCFEPEALGNLIEGIEFHRFYFDGNRKNQVHTTMLNPNVHIIGEDAACVAYVKLTQFLDRNGEAHTRQSQESRVWSKKQGRWLCVHVHRSTQPSTNTTVSEF.

Residues Leu-18–Val-26 and Lys-41 contribute to the ATP site. Residue Asp-134 is the Proton acceptor of the active site. Thr-284 carries the phosphothreonine; by autocatalysis modification. Polar residues-rich tracts occupy residues Thr-316–Ser-345 and Pro-377–Ile-391. 2 disordered regions span residues Thr-316–Ala-347 and Leu-369–Gln-400.

The protein belongs to the protein kinase superfamily. CAMK Ser/Thr protein kinase family. CaMK subfamily. As to quaternary structure, dodecamer. Subunits are tightly packed around a central ring-shaped scaffold with extensive contacts between the regulatory segment of one kinase and the catalytic domain of another enabling cooperative activation of a subunit by the adjacent molecule. Interacts with and phosphorylates daf-16; the interaction promotes daf-16 nuclear localization. Interacts with egl-2 and tir-1. Interacts with nsy-1. Mg(2+) serves as cofactor.

It is found in the cytoplasm. The protein resides in the cell projection. Its subcellular location is the axon. The protein localises to the perikaryon. It catalyses the reaction L-seryl-[protein] + ATP = O-phospho-L-seryl-[protein] + ADP + H(+). The catalysed reaction is L-threonyl-[protein] + ATP = O-phospho-L-threonyl-[protein] + ADP + H(+). With respect to regulation, ca(2+)/calmodulin binding removes an autoinhibitory regulatory segment located C-terminal to the kinase domain. This releases the catalytic activity of the enzyme and makes accessible a regulatory residue Thr-284. Phosphorylation of Thr-284 by another kinase domain within the oligomeric holoenzyme keeps CaMKII active in the absence of Ca(2+)/calmodulin by preventing the rebinding of the regulatory segment to the kinase domain and by increasing the affinity of calmodulin for the enzyme. Can respond to high-frequency Ca(2+) pulses to become Ca(2+) independent. Its function is as follows. Role in locomotion and neuronal cell fate specification. Required for the regulation of synaptic density, egg laying, defecation, and meiotic maturation. Required for viability under chronic osmotic stress in which it acts downstream of osr-1. Regulates the synaptic trafficking of glr-1. Bidirectional modulator of neurotransmitter release with negative modulatory effects mainly mediated via slo-1 activation. May suppress the functional response to an internal pacemaker, perhaps by modulating the activity of the IP3 receptor. This Caenorhabditis briggsae protein is Calcium/calmodulin-dependent protein kinase type II.